A 69-amino-acid chain; its full sequence is Sec-independent protein translocase protein TatA (69 aa).

A helical transmembrane segment spans residues 1–21 (MFGLGGQELILILLIILLLFG).

It belongs to the TatA/E family. Forms a complex with TatC.

The protein resides in the cell inner membrane. Its function is as follows. Part of the twin-arginine translocation (Tat) system that transports large folded proteins containing a characteristic twin-arginine motif in their signal peptide across membranes. TatA could form the protein-conducting channel of the Tat system. This chain is Sec-independent protein translocase protein TatA, found in Pelodictyon phaeoclathratiforme (strain DSM 5477 / BU-1).